We begin with the raw amino-acid sequence, 154 residues long: TSET complex member tstD (154 aa).

The protein belongs to the adaptor complexes small subunit family. Component of the TSET complex, a heterohexamer composed of tstA, tstB, tstC, tstD, tstE and tstF, which may act in plasma membrane turnover. tstA, tstB, tstC and tstD are likely to be the core complex members with tstE and tstF acting as associated scaffold proteins.

It is found in the cell membrane. Its subcellular location is the cytoplasm. The polypeptide is TSET complex member tstD (Dictyostelium discoideum (Social amoeba)).